The chain runs to 250 residues: Serine/arginine-rich splicing factor RS31A (250 aa).

RRM domains lie at 2-74 and 95-166; these read RHVY…WAKD and KTLF…YALR. The interval 170–250 is disordered; sequence EREDRYAGSR…SRSPIQRARG (81 aa). Basic residues predominate over residues 177–191; sequence GSRRRRSPSPVYRRR. Phosphoserine is present on residues Ser183, Ser185, Ser201, Ser218, and Ser243. A compositionally biased stretch (basic and acidic residues) spans 192 to 230; that stretch reads PSPDYTRRRSPEYDRYKGPAPYERRKSPDYGRRSSDYGR.

Belongs to the splicing factor SR family. RS subfamily. In terms of assembly, component of the spliceosome. Interacts with MOS14.

Its subcellular location is the nucleus speckle. It localises to the nucleus. It is found in the nucleoplasm. Probably involved in intron recognition and spliceosome assembly. This Arabidopsis thaliana (Mouse-ear cress) protein is Serine/arginine-rich splicing factor RS31A (RS31A).